Reading from the N-terminus, the 207-residue chain is MILVLCFILAYFIGAIPFGVVIGKLFYHTDIRKGGSHNIGTTNAYRMLGPVGGSIVLVLDILKGTLAASLPILFGIEHHWLVLIVGLAAVFGHTFSIYIRFKGGKAVATSAGILLAYNPPFFVIAFAIWFSLILLTSMVSVASTLGMVLITAWSLVYHDWLLTTVACGLLVVFLIKHRANFKRIKAGDENMVPFGLGQYLRQHRGRS.

5 consecutive transmembrane segments (helical) span residues 2–22 (ILVLCFILAYFIGAIPFGVVI), 47–67 (MLGPVGGSIVLVLDILKGTLA), 72–92 (ILFGIEHHWLVLIVGLAAVFG), 121–141 (FFVIAFAIWFSLILLTSMVSV), and 155–175 (LVYHDWLLTTVACGLLVVFLI).

It belongs to the PlsY family. In terms of assembly, probably interacts with PlsX.

The protein resides in the cell membrane. The catalysed reaction is an acyl phosphate + sn-glycerol 3-phosphate = a 1-acyl-sn-glycero-3-phosphate + phosphate. The protein operates within lipid metabolism; phospholipid metabolism. Its function is as follows. Catalyzes the transfer of an acyl group from acyl-phosphate (acyl-PO(4)) to glycerol-3-phosphate (G3P) to form lysophosphatidic acid (LPA). This enzyme utilizes acyl-phosphate as fatty acyl donor, but not acyl-CoA or acyl-ACP. The polypeptide is Glycerol-3-phosphate acyltransferase (Lacticaseibacillus casei (strain BL23) (Lactobacillus casei)).